The primary structure comprises 499 residues: Apolipoprotein N-acyltransferase (499 aa).

The next 6 helical transmembrane spans lie at 9–29 (LLLG…PALL), 50–70 (LGYI…SIGV), 77–97 (FWWA…FFVS), 114–134 (FIFC…FTGL), 148–168 (ILIQ…VIYI), and 183–203 (LKVL…YGSV). The 245-residue stretch at 220-464 (VQPSIPQTEK…DGLIPKKLDS (245 aa)) folds into the CN hydrolase domain. Catalysis depends on glutamate 259, which acts as the Proton acceptor. Residue lysine 322 is part of the active site. Cysteine 372 acts as the Nucleophile in catalysis. Residues 466–486 (TIFSKFGNITILLIVFFIFLV) traverse the membrane as a helical segment.

This sequence belongs to the CN hydrolase family. Apolipoprotein N-acyltransferase subfamily.

The protein localises to the cell inner membrane. The enzyme catalyses N-terminal S-1,2-diacyl-sn-glyceryl-L-cysteinyl-[lipoprotein] + a glycerophospholipid = N-acyl-S-1,2-diacyl-sn-glyceryl-L-cysteinyl-[lipoprotein] + a 2-acyl-sn-glycero-3-phospholipid + H(+). It functions in the pathway protein modification; lipoprotein biosynthesis (N-acyl transfer). Catalyzes the phospholipid dependent N-acylation of the N-terminal cysteine of apolipoprotein, the last step in lipoprotein maturation. The chain is Apolipoprotein N-acyltransferase from Rickettsia bellii (strain RML369-C).